The chain runs to 595 residues: MSWLFGVQKNATPQIPDDFQAGAAPGGPQQPGQGQRQEGNSKMAYSFDSTALERAAKAARDLEKFPNAKEALELSRMQEVTRQKEVENETKKIEAQLANMKSEHIRVAEEERRKTLGEETKHAHSRAEYQDQLARKRAEEELAMKARMQEESLRKQEESVKKQEQLRKQTIEHELALKHKYELEKIDAETRARAKAARDNRDVNLEQMKLHEEENRKTVIEKIKTSGELIGSGLNQFLNDKTKIAAAVGGLTALAVGWYTAKRGTGVTARYIESRLGKPSLVRETSRITPLEVLKHPIKSVQMMTRQKKDPLNGVVLPPALERRLRDIAITTSNTKRNNGLFRNVMFYGPPGTGKTLFAKSLAQHSGLDYAVLTGGDIAPLGRDGVSAIHKVFDWASKSRKGLIVFIDEADAFLQKRSKNGMSEDTRAALNAFLFRTGEQSRKFMLVVASNQPEQFDWAVNDRFDQLVEFTLPGMEERERILLQYFNEHIVTPATSGSRSQRLKLDNFDWVAKCNEVAKKTSGMSGRELSKLVIGWQASAYASETGVLTEAIVDRNTADAMVQHEHKMEWLEKEQLKARNQEVKFGTTLKRETAV.

Residues 1 to 48 (MSWLFGVQKNATPQIPDDFQAGAAPGGPQQPGQGQRQEGNSKMAYSFD) form a disordered region. Topologically, residues 1 to 243 (MSWLFGVQKN…LNQFLNDKTK (243 aa)) are mitochondrial intermembrane. The span at 20 to 35 (QAGAAPGGPQQPGQGQ) shows a compositional bias: low complexity. 2 coiled-coil regions span residues 80–107 (VTRQ…HIRV) and 140–175 (EELA…EHEL). Residues 244–260 (IAAAVGGLTALAVGWYT) traverse the membrane as a helical segment. The Mitochondrial matrix segment spans residues 261 to 595 (AKRGTGVTAR…GTTLKRETAV (335 aa)). ATP is bound at residue 349–356 (GPPGTGKT). A PDZ-binding motif is present at residues 592-595 (ETAV).

Belongs to the AAA ATPase family.

Its subcellular location is the mitochondrion inner membrane. It is found in the mitochondrion matrix. The protein localises to the mitochondrion nucleoid. Its function is as follows. Essential for mitochondrial network organization, mitochondrial metabolism and cell growth at organism and cellular level. Important during development for the up-regulation of mitochondrial activity during the transition to higher larval stages. Regulates mitochondrial iron homeostasis. May play an important role in mitochondrial protein synthesis. May also participate in mitochondrial DNA replication. May bind to mitochondrial DNA D-loops and contribute to nucleoid stability. Plays a role in regulating the production of reactive oxygen species in response to heat stress. This Caenorhabditis elegans protein is ATPase family AAA domain-containing protein 3.